We begin with the raw amino-acid sequence, 181 residues long: 6,7-dimethyl-8-ribityllumazine synthase (181 aa).

Residues tyrosine 27, 58–60 (ALE), and 87–89 (CVI) contribute to the 5-amino-6-(D-ribitylamino)uracil site. Residue 92 to 93 (ET) participates in (2S)-2-hydroxy-3-oxobutyl phosphate binding. The Proton donor role is filled by histidine 95. 5-amino-6-(D-ribitylamino)uracil is bound at residue asparagine 120. Residue arginine 134 coordinates (2S)-2-hydroxy-3-oxobutyl phosphate.

It belongs to the DMRL synthase family.

It catalyses the reaction (2S)-2-hydroxy-3-oxobutyl phosphate + 5-amino-6-(D-ribitylamino)uracil = 6,7-dimethyl-8-(1-D-ribityl)lumazine + phosphate + 2 H2O + H(+). Its pathway is cofactor biosynthesis; riboflavin biosynthesis; riboflavin from 2-hydroxy-3-oxobutyl phosphate and 5-amino-6-(D-ribitylamino)uracil: step 1/2. In terms of biological role, catalyzes the formation of 6,7-dimethyl-8-ribityllumazine by condensation of 5-amino-6-(D-ribitylamino)uracil with 3,4-dihydroxy-2-butanone 4-phosphate. This is the penultimate step in the biosynthesis of riboflavin. The protein is 6,7-dimethyl-8-ribityllumazine synthase of Methylobacterium nodulans (strain LMG 21967 / CNCM I-2342 / ORS 2060).